Consider the following 254-residue polypeptide: MSTKNRSDKSSSSSITKDKYTIILPTYKERENLPIIIWLISTELEKCFIDYEVVIVEDNSPDGTLEVAQQLQKIYGEEKIKILSRPGKMGLGSAYMDGIKKSTGNWVILMDADLSHHPKFIPQFIEKQKKLNCEIVTGTRYQSGGGVFGWNLYRKLTSRVANYIASVLLTPGVSDLTGSFRLYRKDVLEKLITQNKSKGYVFQVEMMVRANQLGYQVGEVPITFVDRIFGVSNLDSGEIVGFLKSVLNLFMNIE.

The GDP-alpha-D-mannose site is built by P25, Y27, E29, V56, D58, D111, A112, D113, R140, and R227. A Mg(2+)-binding site is contributed by D113. D113 is a Mn(2+) binding site.

It belongs to the glycosyltransferase 2 family. In terms of assembly, component of the dolichol-phosphate mannose (DPM) synthase complex composed of dpm1, dpm2 and dpm3. Mg(2+) serves as cofactor. Requires Mn(2+) as cofactor. It depends on Ca(2+) as a cofactor.

The protein resides in the endoplasmic reticulum. It carries out the reaction a di-trans,poly-cis-dolichyl phosphate + GDP-alpha-D-mannose = a di-trans,poly-cis-dolichyl beta-D-mannosyl phosphate + GDP. Its pathway is protein modification; protein glycosylation. In terms of biological role, transfers mannose from GDP-mannose to dolichol monophosphate to form dolichol phosphate mannose (Dol-P-Man) which is the mannosyl donor in pathways leading to N-glycosylation, glycosyl phosphatidylinositol membrane anchoring, and O-mannosylation of proteins; catalytic subunit of the dolichol-phosphate mannose (DPM) synthase complex. The sequence is that of Dolichol-phosphate mannosyltransferase subunit 1 (dpm1) from Dictyostelium discoideum (Social amoeba).